The primary structure comprises 87 residues: Small ribosomal subunit protein uS15 (87 aa).

The protein belongs to the universal ribosomal protein uS15 family. Part of the 30S ribosomal subunit. Forms a bridge to the 50S subunit in the 70S ribosome, contacting the 23S rRNA.

In terms of biological role, one of the primary rRNA binding proteins, it binds directly to 16S rRNA where it helps nucleate assembly of the platform of the 30S subunit by binding and bridging several RNA helices of the 16S rRNA. Its function is as follows. Forms an intersubunit bridge (bridge B4) with the 23S rRNA of the 50S subunit in the ribosome. The polypeptide is Small ribosomal subunit protein uS15 (Acetivibrio thermocellus (strain ATCC 27405 / DSM 1237 / JCM 9322 / NBRC 103400 / NCIMB 10682 / NRRL B-4536 / VPI 7372) (Clostridium thermocellum)).